A 1201-amino-acid chain; its full sequence is Vitamin B12-dependent ribonucleotide reductase (1201 aa).

Substrate contacts are provided by residues serine 153, 198 to 199 (AC), glycine 230, 482 to 486 (NPCSE), and 683 to 687 (PTGTI). A disulfide bond links cysteine 199 and cysteine 495. The active-site Proton acceptor is asparagine 482. The active-site Cysteine radical intermediate is the cysteine 484. Glutamate 486 serves as the catalytic Proton acceptor. The span at 1100–1118 (DEIGSKRATAESNGQEKET) shows a compositional bias: basic and acidic residues. Positions 1100-1120 (DEIGSKRATAESNGQEKETLS) are disordered.

Belongs to the ribonucleoside diphosphate reductase class-2 family. It depends on adenosylcob(III)alamin as a cofactor.

The enzyme catalyses a 2'-deoxyribonucleoside 5'-diphosphate + [thioredoxin]-disulfide + H2O = a ribonucleoside 5'-diphosphate + [thioredoxin]-dithiol. Functionally, catalyzes the reduction of ribonucleotides to deoxyribonucleotides. May function to provide a pool of deoxyribonucleotide precursors for DNA repair during oxygen limitation and/or for immediate growth after restoration of oxygen. The protein is Vitamin B12-dependent ribonucleotide reductase (nrdJ) of Leptospira interrogans serogroup Icterohaemorrhagiae serovar copenhageni (strain Fiocruz L1-130).